Reading from the N-terminus, the 312-residue chain is Holliday junction branch migration complex subunit RuvB (312 aa).

Residues 1-168 (MKTNNEFRPQ…FGHVFYLSEY (168 aa)) form a large ATPase domain (RuvB-L) region. Residues Arg-8, Gly-49, Lys-52, Thr-53, Thr-54, 115–117 (EDF), Arg-158, Tyr-168, and Arg-206 contribute to the ATP site. Thr-53 is a binding site for Mg(2+). The small ATPAse domain (RuvB-S) stretch occupies residues 169-234 (ETSEIAAIIL…NIKNIFEKIQ (66 aa)). The head domain (RuvB-H) stretch occupies residues 237 to 312 (DFGLEEQDIN…EFLKNNQLIK (76 aa)). DNA is bound by residues Lys-290 and Arg-295.

It belongs to the RuvB family. In terms of assembly, homohexamer. Forms an RuvA(8)-RuvB(12)-Holliday junction (HJ) complex. HJ DNA is sandwiched between 2 RuvA tetramers; dsDNA enters through RuvA and exits via RuvB. An RuvB hexamer assembles on each DNA strand where it exits the tetramer. Each RuvB hexamer is contacted by two RuvA subunits (via domain III) on 2 adjacent RuvB subunits; this complex drives branch migration. In the full resolvosome a probable DNA-RuvA(4)-RuvB(12)-RuvC(2) complex forms which resolves the HJ.

It localises to the cytoplasm. It carries out the reaction ATP + H2O = ADP + phosphate + H(+). In terms of biological role, the RuvA-RuvB-RuvC complex processes Holliday junction (HJ) DNA during genetic recombination and DNA repair, while the RuvA-RuvB complex plays an important role in the rescue of blocked DNA replication forks via replication fork reversal (RFR). RuvA specifically binds to HJ cruciform DNA, conferring on it an open structure. The RuvB hexamer acts as an ATP-dependent pump, pulling dsDNA into and through the RuvAB complex. RuvB forms 2 homohexamers on either side of HJ DNA bound by 1 or 2 RuvA tetramers; 4 subunits per hexamer contact DNA at a time. Coordinated motions by a converter formed by DNA-disengaged RuvB subunits stimulates ATP hydrolysis and nucleotide exchange. Immobilization of the converter enables RuvB to convert the ATP-contained energy into a lever motion, pulling 2 nucleotides of DNA out of the RuvA tetramer per ATP hydrolyzed, thus driving DNA branch migration. The RuvB motors rotate together with the DNA substrate, which together with the progressing nucleotide cycle form the mechanistic basis for DNA recombination by continuous HJ branch migration. Branch migration allows RuvC to scan DNA until it finds its consensus sequence, where it cleaves and resolves cruciform DNA. This is Holliday junction branch migration complex subunit RuvB from Ureaplasma urealyticum serovar 10 (strain ATCC 33699 / Western).